Consider the following 403-residue polypeptide: Phosphopentomutase (403 aa).

Asp-13, Asp-298, His-303, Asp-339, His-340, and His-351 together coordinate Mn(2+).

Belongs to the phosphopentomutase family. Mn(2+) serves as cofactor.

The protein localises to the cytoplasm. It catalyses the reaction 2-deoxy-alpha-D-ribose 1-phosphate = 2-deoxy-D-ribose 5-phosphate. It carries out the reaction alpha-D-ribose 1-phosphate = D-ribose 5-phosphate. It participates in carbohydrate degradation; 2-deoxy-D-ribose 1-phosphate degradation; D-glyceraldehyde 3-phosphate and acetaldehyde from 2-deoxy-alpha-D-ribose 1-phosphate: step 1/2. Functionally, isomerase that catalyzes the conversion of deoxy-ribose 1-phosphate (dRib-1-P) and ribose 1-phosphate (Rib-1-P) to deoxy-ribose 5-phosphate (dRib-5-P) and ribose 5-phosphate (Rib-5-P), respectively. This Streptococcus pyogenes serotype M2 (strain MGAS10270) protein is Phosphopentomutase.